The sequence spans 414 residues: 2,3-diketo-5-methylthiopentyl-1-phosphate enolase (414 aa).

The Proton acceptor role is filled by K99. Substrate contacts are provided by residues K148, 174–177, H265, G338, and 360–361; these read KDDE and GG. Mg(2+)-binding residues include K174, D176, and E177. K174 is modified (N6-carboxylysine).

This sequence belongs to the RuBisCO large chain family. Type IV subfamily. As to quaternary structure, homodimer. Mg(2+) serves as cofactor.

The catalysed reaction is 5-methylsulfanyl-2,3-dioxopentyl phosphate = 2-hydroxy-5-methylsulfanyl-3-oxopent-1-enyl phosphate. The protein operates within amino-acid biosynthesis; L-methionine biosynthesis via salvage pathway; L-methionine from S-methyl-5-thio-alpha-D-ribose 1-phosphate: step 3/6. Its function is as follows. Catalyzes the enolization of 2,3-diketo-5-methylthiopentyl-1-phosphate (DK-MTP-1-P) into 2-hydroxy-3-keto-5-methylthiopentenyl-1-phosphate (HK-MTPenyl-1-P). The chain is 2,3-diketo-5-methylthiopentyl-1-phosphate enolase from Bacillus cereus (strain B4264).